The following is a 90-amino-acid chain: Probable Fe(2+)-trafficking protein (90 aa).

Belongs to the Fe(2+)-trafficking protein family.

Could be a mediator in iron transactions between iron acquisition and iron-requiring processes, such as synthesis and/or repair of Fe-S clusters in biosynthetic enzymes. In Aeromonas hydrophila subsp. hydrophila (strain ATCC 7966 / DSM 30187 / BCRC 13018 / CCUG 14551 / JCM 1027 / KCTC 2358 / NCIMB 9240 / NCTC 8049), this protein is Probable Fe(2+)-trafficking protein.